A 174-amino-acid polypeptide reads, in one-letter code: Peptide deformylase (174 aa).

2 residues coordinate Fe cation: Cys-91 and His-133. Glu-134 is an active-site residue. His-137 contacts Fe cation.

Belongs to the polypeptide deformylase family. Fe(2+) is required as a cofactor.

It carries out the reaction N-terminal N-formyl-L-methionyl-[peptide] + H2O = N-terminal L-methionyl-[peptide] + formate. Removes the formyl group from the N-terminal Met of newly synthesized proteins. Requires at least a dipeptide for an efficient rate of reaction. N-terminal L-methionine is a prerequisite for activity but the enzyme has broad specificity at other positions. This is Peptide deformylase from Fusobacterium nucleatum subsp. nucleatum (strain ATCC 25586 / DSM 15643 / BCRC 10681 / CIP 101130 / JCM 8532 / KCTC 2640 / LMG 13131 / VPI 4355).